The chain runs to 255 residues: uncharacterized protein (255 aa).

The signal sequence occupies residues 1 to 23 (MKRLNKLVLGIIFLFLVISITAG). Residue Cys-24 is the site of N-palmitoyl cysteine attachment. Residue Cys-24 is the site of S-diacylglycerol cysteine attachment.

It belongs to the staphylococcal tandem lipoprotein family.

It localises to the cell membrane. This is an uncharacterized protein from Staphylococcus aureus (strain Mu50 / ATCC 700699).